The following is an 819-amino-acid chain: MSDEDADEYDDQSSISSVSDDDDFSGSESESYQDTTESTGPSEATTDEMLWGRRRAPVCGIAAQAVRRQILMNQQHEPNVLGNNKKVYQTFGSTPQLANERHKEMYSQIRRGDDSSFRSRDRFVPPRRPRMGYGSSDLSAIEEMSPIRSSTYSSSSEAHRLSSLRAQTEWKPQLTSTTTSFQPLSPMNHHDKENGPFKAPMSPVCSSTPRSQRMYRKNPKYRRQFGSSLQLSESRLEESTSQESERAVTPESWMEHNNENEHPDQMMFAKPKQGSFPRPEAFGLDNAYAKHKDIRGIIFLSMSLCGRRLTLNVQNAAYFCSAARPTSVCSYVSAVLCHRPSSQSSSSSRQYRQRPDECYRTRLVTNCNSPSFDESFYFTFSENCVRDLLIVTVYEMDSNNAEKKRILGCMTFPVSRILKKASQVVGDPFPHYRRQDPMEDVEINNEGFFLLNKDQGRKQNFPQRKVRRQTFYEDPAFTGVSSAGSSVISNNTGGQMTMASPRLSVPNELTMGDYYRSTGSSDMRGRSTNNLLDYTSASSSTNGSAGGPEKLKLHRATLPSITTTTSENNSDDAKSLSPEQSPTDHHFLCPDDNGGVYGAGPAHSAIKKSSVRRAASFTFSPKHSSSKTNLRQLNGREEDKEKKRFLGPISRTLSYLRSKMDLALSTSSLYPSRDDVRQWEISFESLLNNKFGCALFRQFLKKEFSDENMDFWLECEEFKKMKDGKKSTTQKAIEIYSEFVAEHSPKEVNLDSDTRAATKAAVEAGCKPDTFALAQSRVEQLMSKDSYRRFLRDRLFLDLLESYEITDKEDKPSSSKDKN.

Residues 1–11 (MSDEDADEYDD) show a composition bias toward acidic residues. Disordered regions lie at residues 1 to 51 (MSDE…EMLW), 112 to 135 (GDDSSFRSRDRFVPPRRPRMGYGS), and 149 to 259 (SSTY…HNNE). Over residues 32 to 44 (YQDTTESTGPSEA) the composition is skewed to polar residues. Residues 112–124 (GDDSSFRSRDRFV) show a composition bias toward basic and acidic residues. Residues 149-166 (SSTYSSSSEAHRLSSLRA) show a composition bias toward low complexity. A compositionally biased stretch (polar residues) spans 173-185 (QLTSTTTSFQPLS). The segment covering 213 to 223 (RMYRKNPKYRR) has biased composition (basic residues). Over residues 234-259 (SRLEESTSQESERAVTPESWMEHNNE) the composition is skewed to basic and acidic residues. In terms of domain architecture, C2 spans 290–429 (KHKDIRGIIF…KASQVVGDPF (140 aa)). 2 disordered regions span residues 515-594 (YRST…DDNG) and 617-640 (FTFSPKHSSSKTNLRQLNGREEDK). Composition is skewed to polar residues over residues 517–533 (STGSSDMRGRSTNNLLD), 559–568 (PSITTTTSEN), and 617–632 (FTFSPKHSSSKTNLRQ). An RGS domain is found at 682 to 800 (SFESLLNNKF…LRDRLFLDLL (119 aa)).

In terms of assembly, interacts with egl-30.

Inhibits signal transduction by increasing the GTPase activity of G protein alpha subunit egl-30 (G-alpha(q)), thereby driving it into its inactive GDP-bound form. May organize egl-30 into a stable multiprotein signaling complex, and thereby persistently inhibit egl-30 when triggered by calcium or phospholipids. This chain is Regulator of G-protein signaling rgs-7 (rgs-7), found in Caenorhabditis elegans.